Consider the following 273-residue polypeptide: NAD-dependent protein deacetylase 2 (273 aa).

The Deacetylase sirtuin-type domain maps to 1–273 (MSNAPLANQS…RCEAALAFLL (273 aa)). NAD(+)-binding positions include 26–46 (GAGCSTNSGIPDYRDSHGNWK) and 104–107 (QNVD). His122 acts as the Proton acceptor in catalysis. Zn(2+)-binding residues include Cys130, Cys133, Cys181, and Cys184. Residues 221–223 (GSS), 247–249 (NLG), and Cys265 contribute to the NAD(+) site.

Belongs to the sirtuin family. Class II subfamily. Requires Zn(2+) as cofactor.

The protein resides in the cytoplasm. It carries out the reaction N(6)-acetyl-L-lysyl-[protein] + NAD(+) + H2O = 2''-O-acetyl-ADP-D-ribose + nicotinamide + L-lysyl-[protein]. Its function is as follows. NAD-dependent protein deacetylase which modulates the activities of several enzymes which are inactive in their acetylated form. The sequence is that of NAD-dependent protein deacetylase 2 from Bradyrhizobium diazoefficiens (strain JCM 10833 / BCRC 13528 / IAM 13628 / NBRC 14792 / USDA 110).